The following is a 99-amino-acid chain: Nucleoid-associated protein SEQ_0368 (99 aa).

Belongs to the YbaB/EbfC family. In terms of assembly, homodimer.

It is found in the cytoplasm. The protein resides in the nucleoid. Its function is as follows. Binds to DNA and alters its conformation. May be involved in regulation of gene expression, nucleoid organization and DNA protection. The protein is Nucleoid-associated protein SEQ_0368 of Streptococcus equi subsp. equi (strain 4047).